The sequence spans 121 residues: Large ribosomal subunit protein bL12 (121 aa).

Belongs to the bacterial ribosomal protein bL12 family. As to quaternary structure, homodimer. Part of the ribosomal stalk of the 50S ribosomal subunit. Forms a multimeric L10(L12)X complex, where L10 forms an elongated spine to which 2 to 4 L12 dimers bind in a sequential fashion. Binds GTP-bound translation factors.

Forms part of the ribosomal stalk which helps the ribosome interact with GTP-bound translation factors. Is thus essential for accurate translation. This is Large ribosomal subunit protein bL12 from Baumannia cicadellinicola subsp. Homalodisca coagulata.